The chain runs to 393 residues: MEIKGFSFSAVEAGIRYQDRLDLGLIYSDHPVVAAGALTTSLVKAAPVLIDIDRLEDGCAQAILVNSGCANACTGEAGMEVAFVTGELLAKELEIKPENILLSSTGVIGEPLNVRAFRDNISPLVQGLAPDNFEKVAQAIMTTDTVQKVCYHSVEIDGVDVHFMGMAKGAGMIMPNMATMLSFVITDAQIGSAQLKEALTPAVKKTFNRITVDGDTSTNDMVLVMANGGAQNSSIKSGTQAAEDFQGALQYVLMDLALKIVADGEGASKMITIRVCGAREDAEAEQVARTVANSSLVKTAFFGEDANWGRILAAMGRAGVPFDPYQVDISFGDVTLVRDGLAVGRSAEDTATAILKEKEITVCIDLKSGKCCEEVYTCDFSIDYVKINADYRS.

The substrate site is built by threonine 142, lysine 168, threonine 179, glutamate 265, asparagine 388, and serine 393. Threonine 179 acts as the Nucleophile in catalysis.

Belongs to the ArgJ family. Heterotetramer of two alpha and two beta chains.

It is found in the cytoplasm. It catalyses the reaction N(2)-acetyl-L-ornithine + L-glutamate = N-acetyl-L-glutamate + L-ornithine. The enzyme catalyses L-glutamate + acetyl-CoA = N-acetyl-L-glutamate + CoA + H(+). Its pathway is amino-acid biosynthesis; L-arginine biosynthesis; L-ornithine and N-acetyl-L-glutamate from L-glutamate and N(2)-acetyl-L-ornithine (cyclic): step 1/1. It functions in the pathway amino-acid biosynthesis; L-arginine biosynthesis; N(2)-acetyl-L-ornithine from L-glutamate: step 1/4. Catalyzes two activities which are involved in the cyclic version of arginine biosynthesis: the synthesis of N-acetylglutamate from glutamate and acetyl-CoA as the acetyl donor, and of ornithine by transacetylation between N(2)-acetylornithine and glutamate. The sequence is that of Arginine biosynthesis bifunctional protein ArgJ from Desulfotalea psychrophila (strain LSv54 / DSM 12343).